Here is a 134-residue protein sequence, read N- to C-terminus: Small ribosomal subunit protein eS24A (134 aa).

N-acetylserine is present on Ser-2. The segment at 100–134 (IQKVARQQRKQRKNRGKKVFGTGKRLAKRKSKQQD) is disordered. Composition is skewed to basic residues over residues 105-117 (RQQRKQRKNRGKK) and 124-134 (RLAKRKSKQQD).

The protein belongs to the eukaryotic ribosomal protein eS24 family. In terms of assembly, component of the small ribosomal subunit (SSU). Mature yeast ribosomes consist of a small (40S) and a large (60S) subunit. The 40S small subunit contains 1 molecule of ribosomal RNA (18S rRNA) and at least 33 different proteins. The large 60S subunit contains 3 rRNA molecules (25S, 5.8S and 5S rRNA) and at least 46 different proteins.

Its subcellular location is the cytoplasm. Functionally, component of the ribosome, a large ribonucleoprotein complex responsible for the synthesis of proteins in the cell. The small ribosomal subunit (SSU) binds messenger RNAs (mRNAs) and translates the encoded message by selecting cognate aminoacyl-transfer RNA (tRNA) molecules. The large subunit (LSU) contains the ribosomal catalytic site termed the peptidyl transferase center (PTC), which catalyzes the formation of peptide bonds, thereby polymerizing the amino acids delivered by tRNAs into a polypeptide chain. The nascent polypeptides leave the ribosome through a tunnel in the LSU and interact with protein factors that function in enzymatic processing, targeting, and the membrane insertion of nascent chains at the exit of the ribosomal tunnel. This chain is Small ribosomal subunit protein eS24A (rps2401), found in Schizosaccharomyces pombe (strain 972 / ATCC 24843) (Fission yeast).